Here is a 193-residue protein sequence, read N- to C-terminus: Acyl carrier protein phosphodiesterase (193 aa).

It belongs to the AcpH family.

It carries out the reaction holo-[ACP] + H2O = apo-[ACP] + (R)-4'-phosphopantetheine + H(+). Converts holo-ACP to apo-ACP by hydrolytic cleavage of the phosphopantetheine prosthetic group from ACP. The protein is Acyl carrier protein phosphodiesterase of Yersinia enterocolitica serotype O:8 / biotype 1B (strain NCTC 13174 / 8081).